We begin with the raw amino-acid sequence, 266 residues long: 22 kDa alpha-zein 8 (266 aa).

Positions 1–21 (MATKILALLALLALFVSATNA) are cleaved as a signal peptide.

Belongs to the zein family.

Zeins are major seed storage proteins. This Zea mays (Maize) protein is 22 kDa alpha-zein 8.